Reading from the N-terminus, the 100-residue chain is Large ribosomal subunit protein uL23 (100 aa).

The protein belongs to the universal ribosomal protein uL23 family. Part of the 50S ribosomal subunit. Contacts protein L29, and trigger factor when it is bound to the ribosome.

Its function is as follows. One of the early assembly proteins it binds 23S rRNA. One of the proteins that surrounds the polypeptide exit tunnel on the outside of the ribosome. Forms the main docking site for trigger factor binding to the ribosome. The protein is Large ribosomal subunit protein uL23 of Rippkaea orientalis (strain PCC 8801 / RF-1) (Cyanothece sp. (strain PCC 8801)).